Reading from the N-terminus, the 433-residue chain is Phosphomethylpyrimidine synthase 1 (433 aa).

Residues Met95, Tyr124, His163, 185-187, 226-229, and Glu265 contribute to the substrate site; these read SRG and NAMR. Zn(2+) is bound at residue His269. Tyr292 contributes to the substrate binding site. His333 serves as a coordination point for Zn(2+). Residues Cys408, Cys411, and Cys415 each contribute to the [4Fe-4S] cluster site.

The protein belongs to the ThiC family. [4Fe-4S] cluster serves as cofactor.

It carries out the reaction 5-amino-1-(5-phospho-beta-D-ribosyl)imidazole + S-adenosyl-L-methionine = 4-amino-2-methyl-5-(phosphooxymethyl)pyrimidine + CO + 5'-deoxyadenosine + formate + L-methionine + 3 H(+). The protein operates within cofactor biosynthesis; thiamine diphosphate biosynthesis. Functionally, catalyzes the synthesis of the hydroxymethylpyrimidine phosphate (HMP-P) moiety of thiamine from aminoimidazole ribotide (AIR) in a radical S-adenosyl-L-methionine (SAM)-dependent reaction. This Methanothermobacter thermautotrophicus (strain ATCC 29096 / DSM 1053 / JCM 10044 / NBRC 100330 / Delta H) (Methanobacterium thermoautotrophicum) protein is Phosphomethylpyrimidine synthase 1.